We begin with the raw amino-acid sequence, 249 residues long: Anti-H(O) lectin 2 (249 aa).

A glycan (N-linked (GlcNAc...) asparagine) is linked at Asn118. Mn(2+)-binding residues include Glu130 and Asp132. 4 residues coordinate Ca(2+): Asp132, Tyr134, Asn140, and Asp145. Asp145 and His148 together coordinate Mn(2+). Asn245 carries N-linked (GlcNAc...) asparagine glycosylation.

The protein belongs to the leguminous lectin family.

Di-N-acetylchitobiose specific lectin. The chain is Anti-H(O) lectin 2 from Ulex europaeus (Furze).